We begin with the raw amino-acid sequence, 235 residues long: Kinetochore protein Spc25 (235 aa).

Residues 44–106 (KNILSAKEAI…DMEAQLLRHT (63 aa)) adopt a coiled-coil conformation. The interval 193-216 (EVAGASPVTPSGSERPKATSKHSN) is disordered.

This sequence belongs to the SPC25 family. As to quaternary structure, component of the Ndc80 complex, which is composed of Ndc80, Nuf2 and Spc25.

The protein localises to the nucleus. It localises to the chromosome. The protein resides in the centromere. It is found in the kinetochore. Its function is as follows. Acts as a component of the essential kinetochore-associated Ndc80 complex, which is required for chromosome segregation and spindle checkpoint activity during meiosis and mitosis. Required for kinetochore integrity and the organization of stable microtubule binding sites in the outer plate of the kinetochore. Participates in SAC signaling that responds specifically to disruptions in spindle microtubule dynamics. The NDC80 complex synergistically enhances the affinity of the SKA1 complex for microtubules and may allow the NDC80 complex to track depolymerizing microtubules. This Drosophila pseudoobscura pseudoobscura (Fruit fly) protein is Kinetochore protein Spc25.